Reading from the N-terminus, the 402-residue chain is Ketol-acid reductoisomerase, mitochondrial (402 aa).

Residues 1–26 constitute a mitochondrion transit peptide; it reads MAARNCTKALRPLARQLATPAVQRRT. Positions 63–252 constitute a KARI N-terminal Rossmann domain; that stretch reads KEEVHERADW…AVGSGYLYET (190 aa). NADP(+) contacts are provided by residues 90-99, 114-119, and 152-156; these read GYGSQGHGQG, RKNGKS, and SDAAQ. The active site involves His-177. Residues 253–400 enclose the KARI C-terminal knotted domain; the sequence is TFEKEVYSDL…KAVRSLRPEN (148 aa). Mg(2+) contacts are provided by Asp-261, Glu-265, Glu-297, and Glu-301. Residue Ser-323 coordinates substrate.

It belongs to the ketol-acid reductoisomerase family. Requires Mg(2+) as cofactor.

The protein resides in the mitochondrion. It catalyses the reaction (2R)-2,3-dihydroxy-3-methylbutanoate + NADP(+) = (2S)-2-acetolactate + NADPH + H(+). The enzyme catalyses (2R,3R)-2,3-dihydroxy-3-methylpentanoate + NADP(+) = (S)-2-ethyl-2-hydroxy-3-oxobutanoate + NADPH + H(+). It functions in the pathway amino-acid biosynthesis; L-isoleucine biosynthesis; L-isoleucine from 2-oxobutanoate: step 2/4. It participates in amino-acid biosynthesis; L-valine biosynthesis; L-valine from pyruvate: step 2/4. In Neurospora crassa (strain ATCC 24698 / 74-OR23-1A / CBS 708.71 / DSM 1257 / FGSC 987), this protein is Ketol-acid reductoisomerase, mitochondrial (ilv-2).